We begin with the raw amino-acid sequence, 1604 residues long: Putative surface cell antigen sca2 (1604 aa).

The N-terminal stretch at 1–33 is a signal peptide; sequence MSLQNSHSKKYVLTFFMSTCLLTSSFLSTSARA. Disordered regions lie at residues 324–354, 554–603, and 1183–1240; these read TTKP…RTKP, NVNN…SNPN, and QQEN…KSLL. Over residues 554–564 the composition is skewed to low complexity; that stretch reads NVNNNSNKGQN. A compositionally biased stretch (pro residues) spans 568–587; the sequence is ILPPTPPLNGSMPPSPPPPL. Basic and acidic residues-rich tracts occupy residues 1193–1213 and 1227–1240; these read SSTK…KSDS and SKND…KSLL. Residues 1325-1604 form the Autotransporter domain; it reads EASINRGVWI…QGLIKLKVNL (280 aa).

It localises to the cell outer membrane. The protein is Putative surface cell antigen sca2 (sca2) of Rickettsia felis (strain ATCC VR-1525 / URRWXCal2) (Rickettsia azadi).